Here is a 391-residue protein sequence, read N- to C-terminus: Casein kinase II subunit alpha (391 aa).

An interaction with beta subunit region spans residues 36 to 41 (QDDYQL). The Protein kinase domain occupies 39–324 (YQLVRKLGRG…AREAMEHPYF (286 aa)). Residues 45-53 (LGRGKYSEV) and K68 each bind ATP. The active-site Proton acceptor is D156. A phosphothreonine; by CDK1 mark is found at T344 and T360. A phosphoserine; by CDK1 mark is found at S362 and S370.

The protein belongs to the protein kinase superfamily. Ser/Thr protein kinase family. CK2 subfamily. As to quaternary structure, heterotetramer composed of two catalytic subunits (alpha chain and/or alpha' chain) and two regulatory subunits (beta chains). The tetramer can exist as a combination of 2 alpha/2 beta, 2 alpha'/2 beta or 1 alpha/1 alpha'/2 beta subunits. Also part of a CK2-SPT16-SSRP1 complex composed of SSRP1, SUPT16H, CSNK2A1, CSNK2A2 and CSNK2B, which forms following UV irradiation. Interacts with RNPS1. Interacts with SNAI1. Interacts with PML. Interacts with CCAR2. Interacts with HIRIP3. In terms of processing, phosphorylated at Thr-344, Thr-360, Ser-362 and Ser-370 by CDK1 in prophase and metaphase and dephosphorylated during anaphase. Phosphorylation does not directly affect casein kinase 2 activity, but may contribute to its regulation by forming binding sites for interacting proteins and/or targeting it to different compartments.

It localises to the nucleus. It catalyses the reaction L-seryl-[protein] + ATP = O-phospho-L-seryl-[protein] + ADP + H(+). It carries out the reaction L-threonyl-[protein] + ATP = O-phospho-L-threonyl-[protein] + ADP + H(+). With respect to regulation, constitutively active protein kinase whose activity is not directly affected by phosphorylation. Seems to be regulated by level of expression and localization. Its function is as follows. Catalytic subunit of a constitutively active serine/threonine-protein kinase complex that phosphorylates a large number of substrates containing acidic residues C-terminal to the phosphorylated serine or threonine. Regulates numerous cellular processes, such as cell cycle progression, apoptosis and transcription, as well as viral infection. May act as a regulatory node which integrates and coordinates numerous signals leading to an appropriate cellular response. During mitosis, functions as a component of the p53/TP53-dependent spindle assembly checkpoint (SAC) that maintains cyclin-B-CDK1 activity and G2 arrest in response to spindle damage. Also required for p53/TP53-mediated apoptosis, phosphorylating 'Ser-392' of p53/TP53 following UV irradiation. Phosphorylates a number of DNA repair proteins in response to DNA damage, such as MDC1, MRE11, RAD9A, RAD51 and HTATSF1, promoting their recruitment to DNA damage sites. Can also negatively regulate apoptosis. Phosphorylates the caspases CASP9 and CASP2 and the apoptotic regulator NOL3. Phosphorylation protects CASP9 from cleavage and activation by CASP8, and inhibits the dimerization of CASP2 and activation of CASP8. Phosphorylates YY1, protecting YY1 from cleavage by CASP7 during apoptosis. Regulates transcription by direct phosphorylation of RNA polymerases I, II, III and IV. Also phosphorylates and regulates numerous transcription factors including NF-kappa-B, STAT1, CREB1, IRF1, IRF2, ATF1, ATF4, SRF, MAX, JUN, FOS, MYC and MYB. Phosphorylates Hsp90 and its co-chaperones FKBP4 and CDC37, which is essential for chaperone function. Mediates sequential phosphorylation of FNIP1, promoting its gradual interaction with Hsp90, leading to activate both kinase and non-kinase client proteins of Hsp90. Regulates Wnt signaling by phosphorylating CTNNB1 and the transcription factor LEF1. Acts as an ectokinase that phosphorylates several extracellular proteins. Plays an important role in the circadian clock function by phosphorylating BMAL1 at 'Ser-90' which is pivotal for its interaction with CLOCK and which controls CLOCK nuclear entry. Phosphorylates FMR1, promoting FMR1-dependent formation of a membraneless compartment. May phosphorylate histone H2A on 'Ser-1'. This is Casein kinase II subunit alpha (CSNK2A1) from Bos taurus (Bovine).